A 241-amino-acid chain; its full sequence is GPI-anchored hemophore RBT5 (241 aa).

The signal sequence occupies residues 1–20 (MLALSLLSIVSIASAAGVTA). The CFEM domain occupies 26-137 (NPYTIFPSVA…DALAKAADAA (112 aa)). 4 disulfides stabilise this stretch: Cys54-Cys94, Cys58-Cys89, Cys68-Cys75, and Cys77-Cys110. Asp72 contributes to the heme binding site. Low complexity-rich tracts occupy residues 140–154 (TTAESTTAESTAAET) and 163–182 (KETTAAETSKAAESSAPAET). The segment at 140–210 (TTAESTTAES…SVAQSSSSAA (71 aa)) is disordered. Residues 183–199 (SKAEETSKAAETTKAEE) show a composition bias toward basic and acidic residues. Residues 200–210 (SSVAQSSSSAA) show a composition bias toward low complexity. Asn221 carries GPI-anchor amidated asparagine lipidation. A propeptide spans 222-241 (AGNMPAVAIGGVIAAVAALF) (removed in mature form).

This sequence belongs to the RBT5 family. In terms of assembly, interacts with PGA7. The GPI-anchor is attached to the protein in the endoplasmic reticulum and serves to target the protein to the cell surface. There, the glucosamine-inositol phospholipid moiety is cleaved off and the GPI-modified mannoprotein is covalently attached via its lipidless GPI glycan remnant to the 1,6-beta-glucan of the outer cell wall layer. In terms of processing, mannosylated.

The protein resides in the secreted. It is found in the cell wall. It localises to the cell membrane. Its function is as follows. GPI-linked hyphal surface heme-binding protein involved in heme-iron utilization. Heme transfer occurs between PGA7, RBT5 and CSA2 supporting a model in which the 3 CFEM proteins cooperate in a heme-acquisition system and form a cross-cell wall heme-transfer cascade. The ability to acquire iron from host tissues is a major virulence factor of pathogenic microorganisms. Required for biofilm formation. The sequence is that of GPI-anchored hemophore RBT5 from Candida albicans (strain SC5314 / ATCC MYA-2876) (Yeast).